A 106-amino-acid chain; its full sequence is uncharacterized protein (106 aa).

This sequence belongs to the HesB/IscA family.

This is an uncharacterized protein from Cereibacter sphaeroides (Rhodobacter sphaeroides).